Consider the following 153-residue polypeptide: Pheromone-binding protein Gp-9 (153 aa).

A signal peptide spans 1–19 (MKTFVLHIFIFAFVAFASA). 3 disulfide bridges follow: C37/C77, C73/C129, and C118/C138.

This sequence belongs to the PBP/GOBP family. As to quaternary structure, homodimer.

Its subcellular location is the secreted. In terms of biological role, colony queen number, a major feature of social organization, is associated with worker genotype for Gp-9. Colonies are headed by either a single reproductive queen (monogyne form) or multiple queens (polygyne form). Differences in worker Gp-9 genotypes between social forms may cause differences in workers' abilities to recognize queens and regulate their numbers. This is Pheromone-binding protein Gp-9 from Solenopsis geminata (Tropical fire ant).